Reading from the N-terminus, the 279-residue chain is Protease HtpX homolog (279 aa).

Transmembrane regions (helical) follow at residues 6 to 26 and 29 to 49; these read VFVL…ALGG and GAIL…WGSS. Residue His-130 participates in Zn(2+) binding. Glu-131 is a catalytic residue. Zn(2+) is bound at residue His-134. 2 helical membrane passes run 145–165 and 176–196; these read IAAT…FFGG and VAGI…QFAI. Glu-201 contributes to the Zn(2+) binding site.

This sequence belongs to the peptidase M48B family. It depends on Zn(2+) as a cofactor.

It is found in the cell inner membrane. The protein is Protease HtpX homolog of Gemmatimonas aurantiaca (strain DSM 14586 / JCM 11422 / NBRC 100505 / T-27).